The chain runs to 337 residues: DNA-directed RNA polymerase subunit alpha (337 aa).

An alpha N-terminal domain (alpha-NTD) region spans residues 1–231 (MRNITTSAYT…KQLSVFDKIT (231 aa)). The tract at residues 247 to 337 (ENTKLLQNIT…IAELKAQNEG (91 aa)) is alpha C-terminal domain (alpha-CTD).

This sequence belongs to the RNA polymerase alpha chain family. Homodimer. The RNAP catalytic core consists of 2 alpha, 1 beta, 1 beta' and 1 omega subunit. When a sigma factor is associated with the core the holoenzyme is formed, which can initiate transcription.

The catalysed reaction is RNA(n) + a ribonucleoside 5'-triphosphate = RNA(n+1) + diphosphate. Its function is as follows. DNA-dependent RNA polymerase catalyzes the transcription of DNA into RNA using the four ribonucleoside triphosphates as substrates. In Campylobacter jejuni subsp. jejuni serotype O:2 (strain ATCC 700819 / NCTC 11168), this protein is DNA-directed RNA polymerase subunit alpha.